The following is a 498-amino-acid chain: MKWATWILALGLLVVRTVVAREAPRELCYGHPVHDDRRPVGPATDAQPVNPLAPANATGTDYSRGCEMRLLDPPLDVSSRSSDPVNVTVAWFFDGGHCKVPLVHREYYGCPGDAMPSVETCTGGYSYTRTRIDTLMEYALVNASLVLQPGLYDAGLYIVVLVFGDDAYLGTVSLSVEANLDYPCGMKHGLTITRPGATLPPIAPTAGDHQRWRGCFPSTDEGAWENVTAAEKGLSDDYADYYDVHIFRSESDDEVVHGDAPEAPEGEEVTEEEAELTSSDLDNIEIEVVGSPAAPAEGPATEEGRGAEEDEELTSSDLDNIEIEVVGSPRPPASSPPPPPPRPHPRGRDHDHDHGHHRADDRGPQRHHRLPPEPTFVSPSDIFVTPTGSPALLLGFLGSALASRPLHLTAGETAQHVREAQQKSRHIRSLGGLQLSVETETTNTTTTQTGLSGDIRTSIYICVALAGLVVVGIVIMCLHMAIIRARARNDGYRHVASA.

The signal sequence occupies residues 1–20 (MKWATWILALGLLVVRTVVA). 4 N-linked (GlcNAc...) asparagine; by host glycosylation sites follow: asparagine 56, asparagine 86, asparagine 142, and asparagine 226. Repeat copies occupy residues 271–292 (EEEA…VGSP) and 308–329 (EEDE…VGSP). The 2 X 22 AA repeats of E-E-[DE]-[AE]-E-L-T-S-S-D-L-D-N-I-E-I-E-V-V-G-S-P stretch occupies residues 271 to 329 (EEEAELTSSDLDNIEIEVVGSPAAPAEGPATEEGRGAEEDEELTSSDLDNIEIEVVGSP). Positions 290–377 (GSPAAPAEGP…HRLPPEPTFV (88 aa)) are disordered. Residues 292-301 (PAAPAEGPAT) are compositionally biased toward low complexity. A compositionally biased stretch (acidic residues) spans 308-322 (EEDEELTSSDLDNIE). Residues 329-342 (PRPPASSPPPPPPR) are compositionally biased toward pro residues. Positions 346 to 364 (RGRDHDHDHGHHRADDRGP) are enriched in basic and acidic residues. Asparagine 443 carries N-linked (GlcNAc...) asparagine; by host glycosylation. A helical transmembrane segment spans residues 463–483 (VALAGLVVVGIVIMCLHMAII).

The protein belongs to the alphaherpesvirinae glycoprotein G family.

It localises to the virion membrane. In terms of biological role, chemokine-binding protein that inhibits neutrophils' chemotaxis. The polypeptide is Envelope glycoprotein G (gG) (Sus scrofa (Pig)).